We begin with the raw amino-acid sequence, 489 residues long: GDP-fucose protein O-fucosyltransferase 4 (489 aa).

Residues methionine 1–glutamate 7 are Cytoplasmic-facing. The chain crosses the membrane as a helical; Signal-anchor for type II membrane protein span at residues alanine 8–serine 24. The Lumenal segment spans residues glycine 25–leucine 489. Asparagine 162 carries an N-linked (GlcNAc...) asparagine glycan. Cysteines 385 and 388 form a disulfide.

Belongs to the glycosyltransferase 10 family. In terms of tissue distribution, widely expressed. Expressed at slightly higher level in heart, kidney and lung.

Its subcellular location is the endoplasmic reticulum membrane. The catalysed reaction is L-threonyl-[protein] + GDP-beta-L-fucose = 3-O-(alpha-L-fucosyl)-L-threonyl-[protein] + GDP + H(+). It catalyses the reaction L-seryl-[protein] + GDP-beta-L-fucose = 3-O-(alpha-L-fucosyl)-L-seryl-[protein] + GDP + H(+). It functions in the pathway protein modification; protein glycosylation. In terms of biological role, protein O-fucosyltransferase that specifically catalyzes O-fucosylation of serine or threonine residues in EMI domains of target proteins, such as MMRN1, MMRN2 and EMID1. Attaches fucose through an O-glycosidic linkage. O-fucosylation of EMI domain-containing proteins may be required for facilitating protein folding and secretion. Also shows minor alpha-(1,3)-fucosyltransferase activity toward activity toward biantennary N-glycan acceptors. However, this was tested with a library of synthetic substrates and this activity is unsure in vivo. This Mus musculus (Mouse) protein is GDP-fucose protein O-fucosyltransferase 4 (Fut11).